The sequence spans 401 residues: Phosphoglycerate kinase (401 aa).

Residues 24–26 (DFN), R40, 63–66 (HFGR), R122, and R155 contribute to the substrate site. ATP is bound by residues K206, G297, E328, and 357–360 (GGDS).

This sequence belongs to the phosphoglycerate kinase family. Monomer.

The protein resides in the cytoplasm. The enzyme catalyses (2R)-3-phosphoglycerate + ATP = (2R)-3-phospho-glyceroyl phosphate + ADP. It participates in carbohydrate degradation; glycolysis; pyruvate from D-glyceraldehyde 3-phosphate: step 2/5. This Acaryochloris marina (strain MBIC 11017) protein is Phosphoglycerate kinase.